The primary structure comprises 325 residues: Biotin synthase (325 aa).

A Radical SAM core domain is found at 36 to 254 (NEVQLAMLLS…IALARIMFPK (219 aa)). The [4Fe-4S] cluster site is built by Cys-51, Cys-55, and Cys-58. Residues Cys-95, Cys-126, Cys-186, and Arg-258 each coordinate [2Fe-2S] cluster.

The protein belongs to the radical SAM superfamily. Biotin synthase family. As to quaternary structure, homodimer. It depends on [4Fe-4S] cluster as a cofactor. [2Fe-2S] cluster is required as a cofactor.

The enzyme catalyses (4R,5S)-dethiobiotin + (sulfur carrier)-SH + 2 reduced [2Fe-2S]-[ferredoxin] + 2 S-adenosyl-L-methionine = (sulfur carrier)-H + biotin + 2 5'-deoxyadenosine + 2 L-methionine + 2 oxidized [2Fe-2S]-[ferredoxin]. It functions in the pathway cofactor biosynthesis; biotin biosynthesis; biotin from 7,8-diaminononanoate: step 2/2. In terms of biological role, catalyzes the conversion of dethiobiotin (DTB) to biotin by the insertion of a sulfur atom into dethiobiotin via a radical-based mechanism. The polypeptide is Biotin synthase (Neorickettsia sennetsu (strain ATCC VR-367 / Miyayama) (Ehrlichia sennetsu)).